We begin with the raw amino-acid sequence, 1044 residues long: Phosphatidylinositol 4,5-bisphosphate 3-kinase catalytic subunit delta isoform (1044 aa).

The PI3K-ABD domain maps to 16-105; it reads ENQSVVVDFL…LPVLRLVARE (90 aa). Positions 187 to 278 constitute a PI3K-RBD domain; that stretch reads NRALLVNVKF…GLTPHLTMVH (92 aa). A disordered region spans residues 287–312; sequence DEQSNPAPQVQKPRAKPPPIPAKKPS. One can recognise a C2 PI3K-type domain in the interval 319 to 476; sequence LEQPFRIELI…SAAALLICLP (158 aa). The PIK helical domain maps to 497-674; it reads HSECVHVTEE…GLILEAYCRG (178 aa). Tyr524 carries the post-translational modification Phosphotyrosine. The 283-residue stretch at 745 to 1027 folds into the PI3K/PI4K catalytic domain; the sequence is CVEQCTFMDS…KFNEALRESW (283 aa). The segment at 751-757 is G-loop; sequence FMDSKMK. The segment at 890-898 is catalytic loop; sequence GIGDRHSDN. Residues 909 to 935 are activation loop; sequence HIDFGHFLGNFKTKFGINRERVPFILT. A Phosphoserine; by autocatalysis modification is found at Ser1039.

Belongs to the PI3/PI4-kinase family. As to quaternary structure, heterodimer of a catalytic subunit PIK3CD and a p85 regulatory subunit (PIK3R1, PIK3R2 or PIK3R3). Interacts with ERAS. Interacts with HRAS. Post-translationally, autophosphorylation on Ser-1039 results in the almost complete inactivation of the lipid kinase activity. In terms of tissue distribution, in humans, the highest levels of expression are seen in peripheral blood mononuclear cells, spleen, and thymus, and low levels of expression in testes, uterus, colon, and small intestine but not in other tissues examined including prostate, heart, brain, and liver. Isoform 2 is expressed in normal thymus, lung and spleen tissues, and is detected at low levels in normal lysates from colon and ovarian biopsies, at elevated levels in lysates from colorectal tumors and is abundantly expressed in some ovarian tumors (at protein level). Both isoform 1 and isoform 2 are widely expressed. Isoform 1 is expressed predominantly in leukocytes.

The protein localises to the cytoplasm. The enzyme catalyses a 1,2-diacyl-sn-glycero-3-phospho-(1D-myo-inositol-4,5-bisphosphate) + ATP = a 1,2-diacyl-sn-glycero-3-phospho-(1D-myo-inositol-3,4,5-trisphosphate) + ADP + H(+). It catalyses the reaction a 1,2-diacyl-sn-glycero-3-phospho-(1D-myo-inositol) + ATP = a 1,2-diacyl-sn-glycero-3-phospho-(1D-myo-inositol-3-phosphate) + ADP + H(+). The catalysed reaction is 1-octadecanoyl-2-(5Z,8Z,11Z,14Z)-eicosatetraenoyl-sn-glycero-3-phospho-1D-myo-inositol 4,5-bisphosphate + ATP = 1-octadecanoyl-2-(5Z,8Z,11Z,14Z-eicosatetraenoyl)-sn-glycero-3-phospho-(1D-myo-inositol 3,4,5-triphosphate) + ADP + H(+). The protein operates within phospholipid metabolism; phosphatidylinositol phosphate biosynthesis. Its activity is regulated as follows. Activated by growth factors and cytokine receptors through a tyrosine-kinase-dependent mechanism. Activated by RAS. IC87114 inhibits lipid kinase activity and is selective in cells at doses up to 5-10 uM. IC87114 blocks T-cell receptor signaling in naive and memory T-cells and reduces cytokine production by memory T-cells. Functionally, phosphoinositide-3-kinase (PI3K) phosphorylates phosphatidylinositol (PI) and its phosphorylated derivatives at position 3 of the inositol ring to produce 3-phosphoinositides. Uses ATP and PtdIns(4,5)P2 (phosphatidylinositol 4,5-bisphosphate) to generate phosphatidylinositol 3,4,5-trisphosphate (PIP3). PIP3 plays a key role by recruiting PH domain-containing proteins to the membrane, including AKT1 and PDPK1, activating signaling cascades involved in cell growth, survival, proliferation, motility and morphology. Mediates immune responses. Plays a role in B-cell development, proliferation, migration, and function. Required for B-cell receptor (BCR) signaling. Mediates B-cell proliferation response to anti-IgM, anti-CD40 and IL4 stimulation. Promotes cytokine production in response to TLR4 and TLR9. Required for antibody class switch mediated by TLR9. Involved in the antigen presentation function of B-cells. Involved in B-cell chemotaxis in response to CXCL13 and sphingosine 1-phosphate (S1P). Required for proliferation, signaling and cytokine production of naive, effector and memory T-cells. Required for T-cell receptor (TCR) signaling. Mediates TCR signaling events at the immune synapse. Activation by TCR leads to antigen-dependent memory T-cell migration and retention to antigenic tissues. Together with PIK3CG participates in T-cell development. Contributes to T-helper cell expansion and differentiation. Required for T-cell migration mediated by homing receptors SELL/CD62L, CCR7 and S1PR1 and antigen dependent recruitment of T-cells. Together with PIK3CG is involved in natural killer (NK) cell development and migration towards the sites of inflammation. Participates in NK cell receptor activation. Plays a role in NK cell maturation and cytokine production. Together with PIK3CG is involved in neutrophil chemotaxis and extravasation. Together with PIK3CG participates in neutrophil respiratory burst. Plays important roles in mast-cell development and mast cell mediated allergic response. Involved in stem cell factor (SCF)-mediated proliferation, adhesion and migration. Required for allergen-IgE-induced degranulation and cytokine release. The lipid kinase activity is required for its biological function. Isoform 2 may be involved in stabilizing total RAS levels, resulting in increased ERK phosphorylation and increased PI3K activity. This is Phosphatidylinositol 4,5-bisphosphate 3-kinase catalytic subunit delta isoform (PIK3CD) from Homo sapiens (Human).